Here is a 195-residue protein sequence, read N- to C-terminus: Urease accessory protein UreG (195 aa).

9 to 16 is a binding site for GTP; the sequence is GPVGSGKT.

It belongs to the SIMIBI class G3E GTPase family. UreG subfamily. In terms of assembly, homodimer. UreD, UreF and UreG form a complex that acts as a GTP-hydrolysis-dependent molecular chaperone, activating the urease apoprotein by helping to assemble the nickel containing metallocenter of UreC. The UreE protein probably delivers the nickel.

The protein localises to the cytoplasm. Its function is as follows. Facilitates the functional incorporation of the urease nickel metallocenter. This process requires GTP hydrolysis, probably effectuated by UreG. This chain is Urease accessory protein UreG, found in Aliarcobacter butzleri (strain RM4018) (Arcobacter butzleri).